Here is a 280-residue protein sequence, read N- to C-terminus: Myelin proteolipid protein B (280 aa).

The Cytoplasmic segment spans residues 1–10 (MGWHDGCIRC). 2 S-palmitoyl cysteine lipidation sites follow: cysteine 7 and cysteine 10. A helical membrane pass occupies residues 11-36 (MVGVPFASVIATVLCFAGVALFCGCG). Residues 37–59 (HEALSGTEKLIETYFSKNYQEYE) are Extracellular-facing. The helical transmembrane segment at 60–88 (YLIHVINAFQYVIYGIAIFFFLYGILLLA) threads the bilayer. Over 89–152 (EGFYTTTAIK…LGKWLGHPDK (64 aa)) the chain is Cytoplasmic. Residues cysteine 140 and cysteine 142 are each lipidated (S-palmitoyl cysteine). Residues 153-179 (FVGVTYVITILWILIFACSAVPVYIYF) traverse the membrane as a helical segment. Residues 180–239 (NTWVTCQSIAFPGKTTTSVSTLCLDARMYGVLPWNAFPGKVCGTSLLAICKTSEFQMTFH) lie on the Extracellular side of the membrane. Intrachain disulfides connect cysteine 185–cysteine 229 and cysteine 202–cysteine 221. The chain crosses the membrane as a helical span at residues 240 to 269 (LFIAAFVGAAATLVALLTYMVGASFNYAVL). The Cytoplasmic segment spans residues 270 to 280 (RVTGRSDRSKF).

This sequence belongs to the myelin proteolipid protein family.

It localises to the cell membrane. Functionally, this is the major myelin protein from the central nervous system. It plays an important role in the formation or maintenance of the multilamellar structure of myelin. This chain is Myelin proteolipid protein B (plp1-b), found in Xenopus laevis (African clawed frog).